The chain runs to 213 residues: ATP synthase subunit delta 2 (213 aa).

It belongs to the ATPase delta chain family. F-type ATPases have 2 components, F(1) - the catalytic core - and F(0) - the membrane proton channel. F(1) has five subunits: alpha(3), beta(3), gamma(1), delta(1), epsilon(1). F(0) has three main subunits: a(1), b(2) and c(10-14). The alpha and beta chains form an alternating ring which encloses part of the gamma chain. F(1) is attached to F(0) by a central stalk formed by the gamma and epsilon chains, while a peripheral stalk is formed by the delta and b chains.

Its subcellular location is the cell inner membrane. In terms of biological role, f(1)F(0) ATP synthase produces ATP from ADP in the presence of a proton or sodium gradient. F-type ATPases consist of two structural domains, F(1) containing the extramembraneous catalytic core and F(0) containing the membrane proton channel, linked together by a central stalk and a peripheral stalk. During catalysis, ATP synthesis in the catalytic domain of F(1) is coupled via a rotary mechanism of the central stalk subunits to proton translocation. This protein is part of the stalk that links CF(0) to CF(1). It either transmits conformational changes from CF(0) to CF(1) or is implicated in proton conduction. The sequence is that of ATP synthase subunit delta 2 from Brachyspira hyodysenteriae (strain ATCC 49526 / WA1).